A 673-amino-acid polypeptide reads, in one-letter code: MAESSLYRQRLEVIAEKRRLQEEIRAARREVEEEKLRVERLKRKSLRERWLMDGAAAVPEPSEDPTSKDPQSPEGQAQARIRNLEDSLFTLQSQLQLLQSASTGAQHKPSGRPSWRRQGHRPLSQSIVEAGSVGQTDLNKRASLPAGLVGTPPESPSEPREDVLGFLPGPRQVPGAAGDSSEANGPCPSPIPTPEQGLSQRAVPSEGRVGEAKGGGVVSVVWEGLRATEDCATGATGPELEAKVEEVVLEAIGDRKGAGSLELPAWVKEDRGIVEVVWEGVGGSDAEAMGEIGRVPEVVQTSSPRLQERLEAAASIEGEDVPQGSPEGDGQGGSGGEEGSFIWVERVTLSEEWEELLVEGLEGPEVAGRERGDESPLGAEGAKTGGGEETWEAEKRKAEESMGIGSEEKPGTGRDEAEMSPVVERKGGEKKLELESRGSAEKLGTEREGGEEPLGIERKVEGHLRAEKEGDEEKRGAEEEEVEEPLGVEKKGGEEEPEATKEPLEAERKGGEETLEAEKRGGEESLETEKTQGTEGDLNLEQGSREGSESQAEEMNEAGPPLEANTETRPEKEGPQPQEKPVGALEEEGVKPQTAAEGQGPLGDATPLLAETPAPEQPAECQPLLQGEGPSANPSAHPVPTYAPARQPEPSAPTEGEEASGPKQKTCQCCAVM.

2 coiled-coil regions span residues 4–49 (SSLY…LRER) and 75–101 (GQAQARIRNLEDSLFTLQSQLQLLQSA). 2 disordered regions span residues 49-78 (RWLMDGAAAVPEPSEDPTSKDPQSPEGQAQ) and 99-213 (QSAS…GEAK). Over residues 123–137 (LSQSIVEAGSVGQTD) the composition is skewed to polar residues. Phosphoserine occurs at positions 124 and 143. A Phosphothreonine modification is found at Thr151. Residues Ser155, Ser157, and Ser260 each carry the phosphoserine modification. Disordered stretches follow at residues 295-343 (VPEV…SFIW) and 356-673 (LLVE…CAVM). Thr301 carries the post-translational modification Phosphothreonine. Ser325 is subject to Phosphoserine. Over residues 327–338 (EGDGQGGSGGEE) the composition is skewed to gly residues. Phosphoserine occurs at positions 375 and 420. Basic and acidic residues-rich tracts occupy residues 392–477 (EAEK…KRGA) and 487–532 (GVEK…EKTQ). Phosphoserine is present on residues Ser544 and Ser660. 2 S-palmitoyl cysteine lipidation sites follow: Cys667 and Cys669. Cysteine methyl ester is present on Cys670. Cys670 is lipidated: S-farnesyl cysteine. Residues 671-673 (AVM) constitute a propeptide, removed in mature form.

It belongs to the paralemmin family. In terms of assembly, interacts with SIGIRR. Palmitoylated on Cys-667 and Cys-669 and prenylated on Cys-670; which is required for membrane association.

It is found in the cytoplasm. Its subcellular location is the cell membrane. In terms of biological role, ATP-binding protein, which may act as a adapter in the Toll-like receptor (TLR) signaling. This is Paralemmin-3 (PALM3) from Homo sapiens (Human).